Here is a 495-residue protein sequence, read N- to C-terminus: UDP-glycosyltransferase 73E1 (495 aa).

Residues S299, 355–356 (WA), 373–381 (HCGWNSTIE), and 395–398 (FADQ) each bind UDP-alpha-D-glucose.

This sequence belongs to the UDP-glycosyltransferase family.

In terms of biological role, may glycosylate diterpenes or flavonols in leaves. The protein is UDP-glycosyltransferase 73E1 of Stevia rebaudiana (Stevia).